A 163-amino-acid chain; its full sequence is 16S rRNA aminocarboxypropyltransferase (163 aa).

Positions 18, 66, 87, and 106 each coordinate S-adenosyl-L-methionine.

This sequence belongs to the TDD superfamily. TSR3 family.

It is found in the cytoplasm. The catalysed reaction is an N(1)-methylpseudouridine in rRNA + S-adenosyl-L-methionine = N(1)-methyl-N(3)-[(3S)-3-amino-3-carboxypropyl]pseudouridine in rRNA + S-methyl-5'-thioadenosine + H(+). Aminocarboxypropyltransferase that catalyzes the aminocarboxypropyl transfer on pseudouridine corresponding to position 914 in M.jannaschii 16S rRNA. It constitutes the last step in biosynthesis of the hypermodified N1-methyl-N3-(3-amino-3-carboxypropyl) pseudouridine (m1acp3-Psi). The sequence is that of 16S rRNA aminocarboxypropyltransferase from Thermoplasma acidophilum (strain ATCC 25905 / DSM 1728 / JCM 9062 / NBRC 15155 / AMRC-C165).